The following is a 551-amino-acid chain: Membrane protein insertase YidC (551 aa).

A helical transmembrane segment spans residues 3–23 (ANHIRILLLVTIAIMFISLMG). Residues 33–47 (NTKQQTSATQNNSHY) are compositionally biased toward polar residues. The disordered stretch occupies residues 33 to 59 (NTKQQTSATQNNSHYDNADSSTNTDVT). A compositionally biased stretch (low complexity) spans 50 to 59 (ADSSTNTDVT). The next 3 helical transmembrane spans lie at 361 to 381 (LVGN…LIFY), 431 to 451 (LSGC…YWVL), and 504 to 524 (VMMF…SGLV).

Belongs to the OXA1/ALB3/YidC family. Type 1 subfamily. Interacts with the Sec translocase complex via SecD. Specifically interacts with transmembrane segments of nascent integral membrane proteins during membrane integration.

Its subcellular location is the cell inner membrane. Functionally, required for the insertion and/or proper folding and/or complex formation of integral membrane proteins into the membrane. Involved in integration of membrane proteins that insert both dependently and independently of the Sec translocase complex, as well as at least some lipoproteins. Aids folding of multispanning membrane proteins. The chain is Membrane protein insertase YidC from Francisella tularensis subsp. mediasiatica (strain FSC147).